The following is a 518-amino-acid chain: Sensor protein kinase HptS (518 aa).

2 helical membrane passes run 20–40 (IFPV…IYIW) and 222–242 (GITL…FGFI). The 217-residue stretch at 297-513 (EQLIHSIEHT…LICYKIPLSR (217 aa)) folds into the Histidine kinase domain. Position 325 is a phosphohistidine; by autocatalysis (His-325).

Post-translationally, autophosphorylated.

The protein localises to the cell membrane. The catalysed reaction is ATP + protein L-histidine = ADP + protein N-phospho-L-histidine.. Member of the two-component regulatory system HptS/HptR that regulates genes involved in hexose phosphate transport system in response to changes in extracellular phosphate sources. May act as a sensor protein kinase which is autophosphorylated at a histidine residue and transfers its phosphate group to the conserved aspartic acid residue in the regulatory domain of HptS. In turn, HptS antagonizes CcpA-dependent transcription of a subset of CcpA-regulated genes involved in antibiotic susceptibility. This is Sensor protein kinase HptS (hptS) from Staphylococcus aureus (strain MSSA476).